Consider the following 1044-residue polypeptide: Probable pre-mRNA-splicing factor ATP-dependent RNA helicase DEAH6 (1044 aa).

2 disordered regions span residues 99–134 (EADH…SEQL) and 152–211 (RRKV…VRRD). Positions 157 to 167 (EDEDDGTESEE) are enriched in acidic residues. A compositionally biased stretch (basic and acidic residues) spans 168–211 (ERLRDQREREELEQHLRERDTARTRKLTEPKMSKKEQEEFVRRD). The Helicase ATP-binding domain occupies 414-577 (LNAVKDHQVL…FDQAPIFRFP (164 aa)). An ATP-binding site is contributed by 427-434 (GETGSGKT). Positions 524–527 (DEAH) match the DEAH box motif. The Helicase C-terminal domain maps to 599–775 (AITTVLTIHV…SVVLSLKSLG (177 aa)).

It belongs to the DEAD box helicase family. DEAH subfamily. PRP2 sub-subfamily. As to expression, predominantly expressed in flowers.

The catalysed reaction is ATP + H2O = ADP + phosphate + H(+). In terms of biological role, may be involved in pre-mRNA splicing. The sequence is that of Probable pre-mRNA-splicing factor ATP-dependent RNA helicase DEAH6 from Arabidopsis thaliana (Mouse-ear cress).